Consider the following 372-residue polypeptide: Ligninase LG6 (372 aa).

An N-terminal signal peptide occupies residues 1 to 21; sequence MALKQLAAAVALALSIQAAQG. The propeptide occupies 22-28; it reads AAVKEKR. 2 cysteine pairs are disulfide-bonded: Cys31–Cys43 and Cys62–Cys148. His75 (proton acceptor) is an active-site residue. Residues Asp76, Gly94, Asp96, and Ser98 each contribute to the Ca(2+) site. Position 204 (His204) interacts with heme b. Ser205, Asp222, Thr224, Val227, and Asp229 together coordinate Ca(2+). Residues Cys277 and Cys345 are joined by a disulfide bond. N-linked (GlcNAc...) asparagine glycosylation is present at Asn285. Positions 352 to 361 are enriched in low complexity; that stretch reads TLTTLPGPET. The tract at residues 352–372 is disordered; the sequence is TLTTLPGPETSVQRIQPPPGA.

This sequence belongs to the peroxidase family. Ligninase subfamily. Requires heme b as cofactor. It depends on Ca(2+) as a cofactor.

The enzyme catalyses 1-(3,4-dimethoxyphenyl)-2-(2-methoxyphenoxy)propane-1,3-diol + H2O2 = 3,4-dimethoxybenzaldehyde + guaiacol + glycolaldehyde + H2O. It carries out the reaction 2 (3,4-dimethoxyphenyl)methanol + H2O2 = 2 (3,4-dimethoxyphenyl)methanol radical + 2 H2O. It functions in the pathway secondary metabolite metabolism; lignin degradation. Depolymerization of lignin. Catalyzes the C(alpha)-C(beta) cleavage of the propyl side chains of lignin. The sequence is that of Ligninase LG6 (GLG6) from Phanerodontia chrysosporium (White-rot fungus).